The primary structure comprises 256 residues: Protein CUSTOS (256 aa).

A compositionally biased stretch (low complexity) spans 1-19 (MVAPSGAMSDSENSSSSSS). 3 disordered regions span residues 1–83 (MVAP…TPEF), 127–163 (FTSIPGGHKKEASPRPCRKRQPPSSSEDSDEELQRCR), and 227–256 (IQKKRKKKAKKSREAPLCPPAECAAAKPEN). Ser62 bears the Phosphoserine mark. The span at 63–83 (RRHEVNQHEEDGNDLRTTPEF) shows a compositional bias: basic and acidic residues. A Phosphothreonine modification is found at Thr80. Residue Ser139 is modified to Phosphoserine. The Nucleolar localization signal (NLS) signature appears at 228-235 (QKKRKKKA). Basic residues predominate over residues 228–237 (QKKRKKKAKK). The span at 246-256 (PAECAAAKPEN) shows a compositional bias: low complexity.

It belongs to the CUSTOS family.

It localises to the nucleus envelope. Its function is as follows. Plays a role in the regulation of Wnt signaling pathway during early development. The protein is Protein CUSTOS of Mus musculus (Mouse).